Here is a 117-residue protein sequence, read N- to C-terminus: Fluoride-specific ion channel FluC 2 (117 aa).

The next 4 membrane-spanning stretches (helical) occupy residues 1-21 (MITI…RALI), 33-53 (IPIA…FMMG), 61-81 (MFPF…TLSS), and 94-114 (IRFV…CFYG). The Na(+) site is built by Gly-71 and Thr-74.

This sequence belongs to the fluoride channel Fluc/FEX (TC 1.A.43) family.

It localises to the cell membrane. The catalysed reaction is fluoride(in) = fluoride(out). Na(+) is not transported, but it plays an essential structural role and its presence is essential for fluoride channel function. Functionally, fluoride-specific ion channel. Important for reducing fluoride concentration in the cell, thus reducing its toxicity. This chain is Fluoride-specific ion channel FluC 2, found in Staphylococcus epidermidis (strain ATCC 35984 / DSM 28319 / BCRC 17069 / CCUG 31568 / BM 3577 / RP62A).